An 82-amino-acid chain; its full sequence is Turripeptide IX-23 (82 aa).

An N-terminal signal peptide occupies residues 1 to 23 (MMAKLMITVMMVLLLSLQQGADG). Positions 24 to 50 (RSERWRKNQMAASSIMRNLITARIDPP) are excised as a propeptide. 3 cysteine pairs are disulfide-bonded: Cys-53–Cys-68, Cys-58–Cys-72, and Cys-64–Cys-79.

This sequence belongs to the Pg turripeptide superfamily. Expressed by the venom duct.

Its subcellular location is the secreted. This Gemmula speciosa (Splendid gem-turris) protein is Turripeptide IX-23.